The primary structure comprises 401 residues: Imidazolonepropionase (401 aa).

2 residues coordinate Fe(3+): histidine 66 and histidine 68. Positions 66 and 68 each coordinate Zn(2+). The 4-imidazolone-5-propanoate site is built by arginine 75, tyrosine 138, and histidine 171. Tyrosine 138 contributes to the N-formimidoyl-L-glutamate binding site. A Fe(3+)-binding site is contributed by histidine 236. Position 236 (histidine 236) interacts with Zn(2+). Glutamine 239 contacts 4-imidazolone-5-propanoate. Aspartate 311 serves as a coordination point for Fe(3+). Residue aspartate 311 coordinates Zn(2+). Positions 313 and 315 each coordinate N-formimidoyl-L-glutamate. Residue threonine 316 coordinates 4-imidazolone-5-propanoate.

Belongs to the metallo-dependent hydrolases superfamily. HutI family. Zn(2+) is required as a cofactor. The cofactor is Fe(3+).

The protein localises to the cytoplasm. It carries out the reaction 4-imidazolone-5-propanoate + H2O = N-formimidoyl-L-glutamate. It functions in the pathway amino-acid degradation; L-histidine degradation into L-glutamate; N-formimidoyl-L-glutamate from L-histidine: step 3/3. Functionally, catalyzes the hydrolytic cleavage of the carbon-nitrogen bond in imidazolone-5-propanoate to yield N-formimidoyl-L-glutamate. It is the third step in the universal histidine degradation pathway. The protein is Imidazolonepropionase of Acinetobacter baumannii (strain ACICU).